The chain runs to 248 residues: Uridylate kinase (248 aa).

15 to 18 (KLSG) provides a ligand contact to ATP. The interval 23-28 (GAEGFG) is involved in allosteric activation by GTP. Residue Gly-57 participates in UMP binding. Gly-58 and Arg-62 together coordinate ATP. UMP is bound by residues Asp-77 and 138–145 (TGNPFFTT). The ATP site is built by Thr-165, Tyr-171, and Asp-174.

This sequence belongs to the UMP kinase family. Homohexamer.

It is found in the cytoplasm. It carries out the reaction UMP + ATP = UDP + ADP. The protein operates within pyrimidine metabolism; CTP biosynthesis via de novo pathway; UDP from UMP (UMPK route): step 1/1. Allosterically activated by GTP. Inhibited by UTP. Functionally, catalyzes the reversible phosphorylation of UMP to UDP. In Yersinia enterocolitica serotype O:8 / biotype 1B (strain NCTC 13174 / 8081), this protein is Uridylate kinase.